The chain runs to 295 residues: Bifunctional protein FolD (295 aa).

Residues 175–177 and I243 each bind NADP(+); that span reads GVS.

It belongs to the tetrahydrofolate dehydrogenase/cyclohydrolase family. Homodimer.

The enzyme catalyses (6R)-5,10-methylene-5,6,7,8-tetrahydrofolate + NADP(+) = (6R)-5,10-methenyltetrahydrofolate + NADPH. The catalysed reaction is (6R)-5,10-methenyltetrahydrofolate + H2O = (6R)-10-formyltetrahydrofolate + H(+). It participates in one-carbon metabolism; tetrahydrofolate interconversion. Functionally, catalyzes the oxidation of 5,10-methylenetetrahydrofolate to 5,10-methenyltetrahydrofolate and then the hydrolysis of 5,10-methenyltetrahydrofolate to 10-formyltetrahydrofolate. This is Bifunctional protein FolD from Xylella fastidiosa (strain 9a5c).